Here is a 181-residue protein sequence, read N- to C-terminus: Achaete-scute homolog 3 (181 aa).

The segment at 93–106 (AFTRKRNERERQRV) is basic motif. Residues 93–145 (AFTRKRNERERQRVKCVNEGYAQLRHHLPEEYLEKRLSKVETLRAAIKYINYL) enclose the bHLH domain. The segment at 107–145 (KCVNEGYAQLRHHLPEEYLEKRLSKVETLRAAIKYINYL) is helix-loop-helix motif.

In terms of assembly, efficient DNA binding requires dimerization with another bHLH protein. Widely expressed in fetal and adult tissues.

The protein localises to the nucleus. Functionally, transcriptional repressor. Inhibits myogenesis. Plays a role in progenitor cells which differentiate into ductal and acinar, but not myoepithelial, cell lineages in the salivary glands. Involved in the functions of the microvillar cells and Bowman's glands and probably, in a non-cell-autonomous manner, in the development or regeneration of a complete olfactory epithelium (OE). In Homo sapiens (Human), this protein is Achaete-scute homolog 3.